Reading from the N-terminus, the 354-residue chain is Galectin-9 (354 aa).

2 Galectin domains span residues 17 to 147 (FTGI…INFQ) and 226 to 354 (FFTS…HVQT). A beta-D-galactoside contacts are provided by residues Asn-47, His-60, Arg-64, Asn-74, 81 to 87 (WGPEERK), His-266, Arg-270, Thr-280, and 286 to 292 (WGPEERS).

The isoform Long is expressed exclusively in the small intestine.

It is found in the cytoplasm. It localises to the nucleus. Its subcellular location is the secreted. Functionally, binds galactosides. Has high affinity for the Forssman pentasaccharide. Ligand for HAVCR2/TIM3. Binding to HAVCR2 induces T-helper type 1 lymphocyte (Th1) death. Also stimulates bactericidal activity in infected macrophages by causing macrophage activation and IL1B secretion which restricts intracellular bacterial growth. Ligand for P4HB; the interaction retains P4HB at the cell surface of Th2 T helper cells, increasing disulfide reductase activity at the plasma membrane, altering the plasma membrane redox state and enhancing cell migration. Ligand for CD44; the interaction enhances binding of SMAD3 to the FOXP3 promoter, leading to up-regulation of FOXP3 expression and increased induced regulatory T (iTreg) cell stability and suppressive function. Promotes ability of mesenchymal stromal cells to suppress T-cell proliferation. Expands regulatory T-cells and induces cytotoxic T-cell apoptosis following virus infection. Activates ERK1/2 phosphorylation inducing cytokine (IL-6, IL-8, IL-12) and chemokine (CCL2) production in mast and dendritic cells. Inhibits degranulation and induces apoptosis of mast cells. Induces maturation and migration of dendritic cells. Inhibits natural killer (NK) cell function. Can transform NK cell phenotype from peripheral to decidual during pregnancy. Astrocyte derived galectin-9 enhances microglial TNF production. May play a role in thymocyte-epithelial interactions relevant to the biology of the thymus. May provide the molecular basis for urate flux across cell membranes, allowing urate that is formed during purine metabolism to efflux from cells and serving as an electrogenic transporter that plays an important role in renal and gastrointestinal urate excretion. Highly selective to the anion urate. The chain is Galectin-9 (Lgals9) from Rattus norvegicus (Rat).